Consider the following 283-residue polypeptide: Pre-mRNA-splicing factor CWC23 (283 aa).

Residues 15–87 (NLYDVLELPT…DVRPHYDRWL (73 aa)) enclose the J domain.

This sequence belongs to the DnaJ family. Belongs to the CWC complex (or CEF1-associated complex), a spliceosome sub-complex reminiscent of a late-stage spliceosome composed of the U2, U5 and U6 snRNAs and at least BUD13, BUD31, BRR2, CDC40, CEF1, CLF1, CUS1, CWC2, CWC15, CWC21, CWC22, CWC23, CWC24, CWC25, CWC27, ECM2, HSH155, IST3, ISY1, LEA1, MSL1, NTC20, PRP8, PRP9, PRP11, PRP19, PRP21, PRP22, PRP45, PRP46, SLU7, SMB1, SMD1, SMD2, SMD3, SMX2, SMX3, SNT309, SNU114, SPP2, SYF1, SYF2, RSE1 and YJU2.

It localises to the cytoplasm. Its subcellular location is the nucleus. In terms of biological role, involved in pre-mRNA splicing. May be involved in endoplasmic reticulum-associated protein degradation (ERAD) and required for growth at low and high temperatures. The chain is Pre-mRNA-splicing factor CWC23 (CWC23) from Saccharomyces cerevisiae (strain ATCC 204508 / S288c) (Baker's yeast).